The following is a 1150-amino-acid chain: ATP-dependent helicase/deoxyribonuclease subunit B (1150 aa).

ATP is bound at residue 8-15 (GRAGSGKS). [4Fe-4S] cluster contacts are provided by cysteine 786, cysteine 1106, cysteine 1109, and cysteine 1115.

It belongs to the helicase family. AddB/RexB type 1 subfamily. Heterodimer of AddA and AddB. Mg(2+) serves as cofactor. It depends on [4Fe-4S] cluster as a cofactor.

In terms of biological role, the heterodimer acts as both an ATP-dependent DNA helicase and an ATP-dependent, dual-direction single-stranded exonuclease. Recognizes the chi site generating a DNA molecule suitable for the initiation of homologous recombination. The AddB subunit has 5' -&gt; 3' nuclease activity but not helicase activity. The chain is ATP-dependent helicase/deoxyribonuclease subunit B from Clostridium botulinum (strain Hall / ATCC 3502 / NCTC 13319 / Type A).